We begin with the raw amino-acid sequence, 349 residues long: uncharacterized protein (349 aa).

A Phosphoserine modification is found at serine 2.

This is an uncharacterized protein from Saccharomyces cerevisiae (strain ATCC 204508 / S288c) (Baker's yeast).